The sequence spans 231 residues: Lactate utilization protein C (231 aa).

This sequence belongs to the LutC/YkgG family.

In terms of biological role, is involved in L-lactate degradation and allows cells to grow with lactate as the sole carbon source. The protein is Lactate utilization protein C of Macrococcus caseolyticus (strain JCSC5402) (Macrococcoides caseolyticum).